The sequence spans 227 residues: Cytochrome c oxidase subunit 2 (227 aa).

At 1–14 the chain is on the mitochondrial intermembrane side; the sequence is MAYPYELGFQDASS. Residues 15-45 traverse the membrane as a helical segment; it reads PIMEELLHFHDHTLMIVFLISTLVLYLITIM. Over 46 to 59 the chain is Mitochondrial matrix; it reads LTTKLTHTSTMDAQ. The helical transmembrane segment at 60 to 87 threads the bilayer; sequence EIETIWTILPAIILILIALPSLRILYMM. The Mitochondrial intermembrane segment spans residues 88–227; that stretch reads DEINSPSLTV…DFEIWSSSML (140 aa). Residues His161, Cys196, Glu198, Cys200, His204, and Met207 each coordinate Cu cation. Residue Glu198 participates in Mg(2+) binding.

The protein belongs to the cytochrome c oxidase subunit 2 family. In terms of assembly, component of the cytochrome c oxidase (complex IV, CIV), a multisubunit enzyme composed of 14 subunits. The complex is composed of a catalytic core of 3 subunits MT-CO1, MT-CO2 and MT-CO3, encoded in the mitochondrial DNA, and 11 supernumerary subunits COX4I, COX5A, COX5B, COX6A, COX6B, COX6C, COX7A, COX7B, COX7C, COX8 and NDUFA4, which are encoded in the nuclear genome. The complex exists as a monomer or a dimer and forms supercomplexes (SCs) in the inner mitochondrial membrane with NADH-ubiquinone oxidoreductase (complex I, CI) and ubiquinol-cytochrome c oxidoreductase (cytochrome b-c1 complex, complex III, CIII), resulting in different assemblies (supercomplex SCI(1)III(2)IV(1) and megacomplex MCI(2)III(2)IV(2)). Found in a complex with TMEM177, COA6, COX18, COX20, SCO1 and SCO2. Interacts with TMEM177 in a COX20-dependent manner. Interacts with COX20. Interacts with COX16. It depends on Cu cation as a cofactor.

The protein localises to the mitochondrion inner membrane. The enzyme catalyses 4 Fe(II)-[cytochrome c] + O2 + 8 H(+)(in) = 4 Fe(III)-[cytochrome c] + 2 H2O + 4 H(+)(out). In terms of biological role, component of the cytochrome c oxidase, the last enzyme in the mitochondrial electron transport chain which drives oxidative phosphorylation. The respiratory chain contains 3 multisubunit complexes succinate dehydrogenase (complex II, CII), ubiquinol-cytochrome c oxidoreductase (cytochrome b-c1 complex, complex III, CIII) and cytochrome c oxidase (complex IV, CIV), that cooperate to transfer electrons derived from NADH and succinate to molecular oxygen, creating an electrochemical gradient over the inner membrane that drives transmembrane transport and the ATP synthase. Cytochrome c oxidase is the component of the respiratory chain that catalyzes the reduction of oxygen to water. Electrons originating from reduced cytochrome c in the intermembrane space (IMS) are transferred via the dinuclear copper A center (CU(A)) of subunit 2 and heme A of subunit 1 to the active site in subunit 1, a binuclear center (BNC) formed by heme A3 and copper B (CU(B)). The BNC reduces molecular oxygen to 2 water molecules using 4 electrons from cytochrome c in the IMS and 4 protons from the mitochondrial matrix. This is Cytochrome c oxidase subunit 2 (MT-CO2) from Cavia aperea (Brazilian guinea pig).